We begin with the raw amino-acid sequence, 284 residues long: Pantothenate synthetase (284 aa).

Residue 30–37 (MGNLHQGH) participates in ATP binding. Histidine 37 serves as the catalytic Proton donor. Glutamine 61 contacts (R)-pantoate. Glutamine 61 lines the beta-alanine pocket. 149–152 (GQKD) contributes to the ATP binding site. Glutamine 155 provides a ligand contact to (R)-pantoate. ATP contacts are provided by residues valine 178 and 186-189 (LSSR).

The protein belongs to the pantothenate synthetase family. Homodimer.

It is found in the cytoplasm. It catalyses the reaction (R)-pantoate + beta-alanine + ATP = (R)-pantothenate + AMP + diphosphate + H(+). It functions in the pathway cofactor biosynthesis; (R)-pantothenate biosynthesis; (R)-pantothenate from (R)-pantoate and beta-alanine: step 1/1. Functionally, catalyzes the condensation of pantoate with beta-alanine in an ATP-dependent reaction via a pantoyl-adenylate intermediate. The polypeptide is Pantothenate synthetase (Aeromonas salmonicida (strain A449)).